The following is a 324-amino-acid chain: Glutathione synthetase (324 aa).

The ATP-grasp domain maps to Lys-133 to Glu-317. Residue Val-159–Gly-215 participates in ATP binding. Residues Glu-288 and Asn-290 each coordinate Mg(2+).

This sequence belongs to the prokaryotic GSH synthase family. Requires Mg(2+) as cofactor. The cofactor is Mn(2+).

The catalysed reaction is gamma-L-glutamyl-L-cysteine + glycine + ATP = glutathione + ADP + phosphate + H(+). It participates in sulfur metabolism; glutathione biosynthesis; glutathione from L-cysteine and L-glutamate: step 2/2. The polypeptide is Glutathione synthetase (Nostoc sp. (strain PCC 7120 / SAG 25.82 / UTEX 2576)).